The sequence spans 208 residues: Protein-L-isoaspartate O-methyltransferase (208 aa).

Serine 59 is a catalytic residue.

It belongs to the methyltransferase superfamily. L-isoaspartyl/D-aspartyl protein methyltransferase family.

The protein localises to the cytoplasm. The enzyme catalyses [protein]-L-isoaspartate + S-adenosyl-L-methionine = [protein]-L-isoaspartate alpha-methyl ester + S-adenosyl-L-homocysteine. Catalyzes the methyl esterification of L-isoaspartyl residues in peptides and proteins that result from spontaneous decomposition of normal L-aspartyl and L-asparaginyl residues. It plays a role in the repair and/or degradation of damaged proteins. This is Protein-L-isoaspartate O-methyltransferase from Citrobacter koseri (strain ATCC BAA-895 / CDC 4225-83 / SGSC4696).